We begin with the raw amino-acid sequence, 256 residues long: Alcohol dehydrogenase (256 aa).

F12–L35 provides a ligand contact to NAD(+). S140 is a substrate binding site. Y153 functions as the Proton acceptor in the catalytic mechanism.

Belongs to the short-chain dehydrogenases/reductases (SDR) family. In terms of assembly, homodimer.

It carries out the reaction a primary alcohol + NAD(+) = an aldehyde + NADH + H(+). The enzyme catalyses a secondary alcohol + NAD(+) = a ketone + NADH + H(+). The sequence is that of Alcohol dehydrogenase (Adh) from Drosophila orena (Fruit fly).